The sequence spans 37 residues: Large ribosomal subunit protein bL36 (37 aa).

Belongs to the bacterial ribosomal protein bL36 family.

This is Large ribosomal subunit protein bL36 from Desulforamulus reducens (strain ATCC BAA-1160 / DSM 100696 / MI-1) (Desulfotomaculum reducens).